The primary structure comprises 461 residues: Nuclear distribution protein PAC1 (461 aa).

The region spanning 9-41 (QAEELHKSIIAYLTANNLLDTANTLRAELNLNE) is the LisH domain. A coiled-coil region spans residues 61-88 (TSVVRLQKKIMDLESRMSAMQAELDNAT). WD repeat units lie at residues 114–155 (SHRD…RTIK), 157–197 (HTRA…KNIR), 201–248 (GHDH…CLRT), 251–290 (GHTA…PETK), 312–355 (QYLS…LLTL), 357–396 (GHDN…KCIK), 401–446 (AHER…IRCV), and 448–461 (ATGG…IFAN).

The protein belongs to the WD repeat LIS1/nudF family. Self-associates. Interacts with NDL1 and dynein.

Its subcellular location is the cytoplasm. The protein resides in the cytoskeleton. It is found in the spindle pole. In terms of biological role, positively regulates the activity of the minus-end directed microtubule motor protein dynein. May enhance dynein-mediated microtubule sliding by targeting dynein to the microtubule plus end. Required for nuclear migration during vegetative growth as well as development. Required for retrograde early endosome (EE) transport from the hyphal tip. Required for localization of dynein to the mitotic spindle poles. Recruits additional proteins to the dynein complex at SPBs. The sequence is that of Nuclear distribution protein PAC1 from Arthroderma benhamiae (strain ATCC MYA-4681 / CBS 112371) (Trichophyton mentagrophytes).